Reading from the N-terminus, the 127-residue chain is Protein ApaG (127 aa).

An ApaG domain is found at 3 to 127 (NNPSSKIEVA…FVLSVPRTLH (125 aa)).

This chain is Protein ApaG, found in Xylella fastidiosa (strain M23).